The sequence spans 186 residues: Superoxide dismutase [Cu-Zn] (186 aa).

A signal peptide spans 1–22 (MNMKTLLALAVSAVCSVSVAQA). Residues H79, H81, and H104 each contribute to the Cu cation site. C86 and C182 are joined by a disulfide. Zn(2+) is bound by residues H104, H113, H122, and D125. H160 contacts Cu cation.

The protein belongs to the Cu-Zn superoxide dismutase family. In terms of assembly, homodimer. Cu cation serves as cofactor. The cofactor is Zn(2+).

The protein localises to the periplasm. It catalyses the reaction 2 superoxide + 2 H(+) = H2O2 + O2. Destroys radicals which are normally produced within the cells and which are toxic to biological systems. This chain is Superoxide dismutase [Cu-Zn] (sodC), found in Neisseria meningitidis serogroup A / serotype 4A (strain DSM 15465 / Z2491).